The sequence spans 505 residues: MSRNYNDELQFLDKINKNCWRIKKGFVPNMQVEGVFYVNDALEKLMFEELRNACRGGGVGGFLPAMKQIGNVAALPGIVHRSIGLPDVHSGYGFAIGNMAAFDMNDPEAVVSPGGVGFDINCGVRLLRTNLDESDVQPVKEQLAQAMFDHIPVGVGSKGVIPMNAKDLEEALEMGVDWSLREGYAWAEDKEHCEEYGRMLQADPNKVSPRAKKRGLPQLGTLGAGNHYAEIQVVDEIFNEYAAKKMGIDHKGQVCVMIHSGSRGLGHQVATDALVAMEKAMKRDKIIVNDRQLACARIASPEGQDYLKGMAAAGNYAWVNRSSMTFLTRQAFAKVFNTTPDDLDLHVIYDVSHNIAKVEQHVVDGKERTLLVHRKGSTRAFPPHHPLIAVDYQLTGQPVLIGGTMGTCSYVLTGTEQGMTETFGTTCHGAGRALSRAKSRRNLDFQDVLDKLADMGIAIRVASPKLVMEEAPESYKNVTDVVNTCHDAGISKKAIKLRPIAVIKG.

Mn(2+) contacts are provided by Asp-119, Cys-122, His-227, and His-259. Residue Asn-226–Glu-230 participates in GMP binding. A Phosphoserine modification is found at Ser-300. Residue His-353 participates in Mn(2+) binding. Residues His-353 to Asn-354, Gly-402 to Met-405, Ser-409, and His-428 to Gly-431 contribute to the GMP site. His-428 functions as the GMP-histidine intermediate in the catalytic mechanism. Residue Lys-496 forms a Glycyl lysine isopeptide (Lys-Gly) (interchain with G-Cter in SUMO2) linkage. Lys-504 contributes to the GMP binding site.

This sequence belongs to the RtcB family. In terms of assembly, catalytic component of the tRNA-splicing ligase complex. Requires Mn(2+) as cofactor.

The protein resides in the nucleus. Its subcellular location is the cytoplasm. The catalysed reaction is a 3'-end 3'-phospho-ribonucleotide-RNA + a 5'-end dephospho-ribonucleoside-RNA + GTP = a ribonucleotidyl-ribonucleotide-RNA + GMP + diphosphate. It catalyses the reaction a 3'-end 2',3'-cyclophospho-ribonucleotide-RNA + a 5'-end dephospho-ribonucleoside-RNA + GTP + H2O = a ribonucleotidyl-ribonucleotide-RNA + GMP + diphosphate + H(+). Functionally, catalytic subunit of the tRNA-splicing ligase complex that acts by directly joining spliced tRNA halves to mature-sized tRNAs by incorporating the precursor-derived splice junction phosphate into the mature tRNA as a canonical 3',5'-phosphodiester. May act as an RNA ligase with broad substrate specificity, and may function toward other RNAs. The protein is RNA-splicing ligase RtcB homolog of Rattus norvegicus (Rat).